A 260-amino-acid polypeptide reads, in one-letter code: Type III pantothenate kinase (260 aa).

6-13 serves as a coordination point for ATP; it reads DAGNTRIK. Substrate is bound by residues Y100 and 107–110; that span reads GADR. D109 functions as the Proton acceptor in the catalytic mechanism. An ATP-binding site is contributed by T133. Position 186 (T186) interacts with substrate.

The protein belongs to the type III pantothenate kinase family. As to quaternary structure, homodimer. NH4(+) serves as cofactor. K(+) is required as a cofactor.

The protein localises to the cytoplasm. It catalyses the reaction (R)-pantothenate + ATP = (R)-4'-phosphopantothenate + ADP + H(+). Its pathway is cofactor biosynthesis; coenzyme A biosynthesis; CoA from (R)-pantothenate: step 1/5. Catalyzes the phosphorylation of pantothenate (Pan), the first step in CoA biosynthesis. The sequence is that of Type III pantothenate kinase from Janthinobacterium sp. (strain Marseille) (Minibacterium massiliensis).